Reading from the N-terminus, the 327-residue chain is Cytochrome P450 2C42 (327 aa).

Cysteine 272 provides a ligand contact to heme.

Belongs to the cytochrome P450 family. Heme serves as cofactor.

It is found in the endoplasmic reticulum membrane. Its subcellular location is the microsome membrane. It catalyses the reaction an organic molecule + reduced [NADPH--hemoprotein reductase] + O2 = an alcohol + oxidized [NADPH--hemoprotein reductase] + H2O + H(+). In terms of biological role, cytochromes P450 are a group of heme-thiolate monooxygenases. In liver microsomes, this enzyme is involved in an NADPH-dependent electron transport pathway. It oxidizes a variety of structurally unrelated compounds, including steroids, fatty acids, and xenobiotics. This Sus scrofa (Pig) protein is Cytochrome P450 2C42 (CYP2C42).